The primary structure comprises 389 residues: Multidrug resistance protein 1 (389 aa).

11 consecutive transmembrane segments (helical) span residues 6–26 (ITLTILLTNLFIAFLGIGLVI), 42–62 (AVGYMVACFAITQLIVSPIAG), 71–91 (KIMIVIGLLFFSVSEFLFGIG), 102–122 (MLGGISAAFIMPGVTAFIADI), 134–154 (YMSAAISTGFIIGPGIGGFLA), 160–180 (LPFFFAAAFALLAAILSILTL), 202–222 (IFAPMYFIAFLIILISSFGLA), 243–263 (IAIMITGGAIVGAITQVVLFD), 286–306 (VFLLTTVHSYVAILLVTVTVF), 336–356 (SMFTSIGNVFGPIIGGMLFDI), and 358–378 (VNYPFYFATVTLAIGIALTIA).

It belongs to the major facilitator superfamily. TCR/Tet family.

Its subcellular location is the cell membrane. Energy-dependent efflux pump responsible for decreased drug accumulation in multi-drug-resistant cells. Probably uses a transmembrane proton gradient as the energy source. Causes the efflux of a variety of toxic substances, including such structurally diverse compounds as ethidium bromide, rhodamine and acridine dyes, tetraphenylphosphonium, puromycin, chloramphenicol, doxorubicin, and fluoroquinolone antibiotics. The protein is Multidrug resistance protein 1 (bmr) of Bacillus subtilis (strain 168).